We begin with the raw amino-acid sequence, 249 residues long: ATP synthase subunits region ORF 6 (249 aa).

This Fuscovulum blasticum (Rhodobacter blasticus) protein is ATP synthase subunits region ORF 6.